A 198-amino-acid chain; its full sequence is Probable GTP-binding protein EngB (198 aa).

In terms of domain architecture, EngB-type G spans 22 to 195 (DLPEIALAGR…WKAIHKFTKT (174 aa)). Residues 30–37 (GRSNVGKS), 57–61 (GKTQT), 75–78 (DVPG), 142–145 (TKAD), and 174–176 (FSS) each bind GTP. Positions 37 and 59 each coordinate Mg(2+).

It belongs to the TRAFAC class TrmE-Era-EngA-EngB-Septin-like GTPase superfamily. EngB GTPase family. It depends on Mg(2+) as a cofactor.

In terms of biological role, necessary for normal cell division and for the maintenance of normal septation. This chain is Probable GTP-binding protein EngB, found in Bacillus cereus (strain B4264).